The primary structure comprises 499 residues: Glutamyl-tRNA(Gln) amidotransferase subunit A (499 aa).

Active-site charge relay system residues include Lys80 and Ser155. The active-site Acyl-ester intermediate is Ser179.

The protein belongs to the amidase family. GatA subfamily. As to quaternary structure, heterotrimer of A, B and C subunits.

It carries out the reaction L-glutamyl-tRNA(Gln) + L-glutamine + ATP + H2O = L-glutaminyl-tRNA(Gln) + L-glutamate + ADP + phosphate + H(+). Allows the formation of correctly charged Gln-tRNA(Gln) through the transamidation of misacylated Glu-tRNA(Gln) in organisms which lack glutaminyl-tRNA synthetase. The reaction takes place in the presence of glutamine and ATP through an activated gamma-phospho-Glu-tRNA(Gln). This chain is Glutamyl-tRNA(Gln) amidotransferase subunit A, found in Cupriavidus metallidurans (strain ATCC 43123 / DSM 2839 / NBRC 102507 / CH34) (Ralstonia metallidurans).